A 420-amino-acid polypeptide reads, in one-letter code: Histidine--tRNA ligase (420 aa).

Belongs to the class-II aminoacyl-tRNA synthetase family. As to quaternary structure, homodimer.

The protein localises to the cytoplasm. It catalyses the reaction tRNA(His) + L-histidine + ATP = L-histidyl-tRNA(His) + AMP + diphosphate + H(+). This is Histidine--tRNA ligase from Thermotoga petrophila (strain ATCC BAA-488 / DSM 13995 / JCM 10881 / RKU-1).